A 186-amino-acid polypeptide reads, in one-letter code: NADH dehydrogenase [ubiquinone] 1 beta subcomplex subunit 8, mitochondrial (186 aa).

A mitochondrion-targeting transit peptide spans 1–28 (MAAARAGVLGVRWLQKAARNVVPLGART). A helical membrane pass occupies residues 133–153 (LFGFVAFMLFMFWVGETYPAY).

It belongs to the complex I NDUFB8 subunit family. As to quaternary structure, complex I is composed of 45 different subunits.

It is found in the mitochondrion inner membrane. Its function is as follows. Accessory subunit of the mitochondrial membrane respiratory chain NADH dehydrogenase (Complex I), that is believed not to be involved in catalysis. Complex I functions in the transfer of electrons from NADH to the respiratory chain. The immediate electron acceptor for the enzyme is believed to be ubiquinone. This Bos taurus (Bovine) protein is NADH dehydrogenase [ubiquinone] 1 beta subcomplex subunit 8, mitochondrial (NDUFB8).